The sequence spans 685 residues: ATP-dependent zinc metalloprotease FTSH 8, chloroplastic (685 aa).

The N-terminal 37 residues, 1 to 37 (MAASSACLLGNGLSVYTTKQRFQKLGLDRTSKVTVVK), are a transit peptide targeting the chloroplast. The transit peptide at 38 to 73 (ASLDEKKHEGRRGFFKLLLGNAAAGVGLLASGNANA) directs the protein to the thylakoid. Topologically, residues 38 to 161 (ASLDEKKHEG…HNAQEDQGSP (124 aa)) are lumenal, thylakoid. A helical membrane pass occupies residues 162–182 (ILNLIGNLAFPVILIGGLFLL). Topologically, residues 183-685 (SRRSSGGMGG…STSTPTPASV (503 aa)) are stromal. 260 to 267 (GPPGTGKT) contacts ATP. Position 481 (histidine 481) interacts with Zn(2+). Residue glutamate 482 is part of the active site. Zn(2+) contacts are provided by histidine 485 and aspartate 559.

It in the N-terminal section; belongs to the AAA ATPase family. This sequence in the C-terminal section; belongs to the peptidase M41 family. In terms of assembly, heterohexamers with FTSH1, FTSH2 and FTSH5. May also form homooligomers. It depends on Zn(2+) as a cofactor. Expressed in cotyledons, cauline and rosette leaves, stems, sepals, flovers and siliques. Very low in roots.

It is found in the plastid. The protein localises to the chloroplast thylakoid membrane. Part of a complex that function as an ATP-dependent zinc metallopeptidase. Involved in the thylakoid formation and in the removal of damaged D1 in the photosystem II, preventing cell death under high-intensity light conditions. The protein is ATP-dependent zinc metalloprotease FTSH 8, chloroplastic (FTSH8) of Arabidopsis thaliana (Mouse-ear cress).